The chain runs to 422 residues: L-cysteine:1D-myo-inositol 2-amino-2-deoxy-alpha-D-glucopyranoside ligase (422 aa).

Zn(2+) is bound at residue Cys-43. Residues 43–46 (CGIT), Thr-58, and 81–83 (NVT) each bind L-cysteinyl-5'-AMP. A 'HIGH' region motif is present at residues 45–55 (ITPYDATHLGH). The segment covering 185–200 (AERGGDPDRPGKRNRL) has biased composition (basic and acidic residues). A disordered region spans residues 185-221 (AERGGDPDRPGKRNRLDPMLWRGRRPGEPSWPGPRGV). The 'ERGGDP' region signature appears at 186 to 191 (ERGGDP). Position 227 (Trp-227) interacts with L-cysteinyl-5'-AMP. Zn(2+) is bound at residue Cys-231. 249-251 (GSD) contributes to the L-cysteinyl-5'-AMP binding site. His-256 serves as a coordination point for Zn(2+). Residue Ile-288 participates in L-cysteinyl-5'-AMP binding. Residues 294 to 298 (KMSKS) carry the 'KMSKS' region motif.

The protein belongs to the class-I aminoacyl-tRNA synthetase family. MshC subfamily. As to quaternary structure, monomer. It depends on Zn(2+) as a cofactor.

The enzyme catalyses 1D-myo-inositol 2-amino-2-deoxy-alpha-D-glucopyranoside + L-cysteine + ATP = 1D-myo-inositol 2-(L-cysteinylamino)-2-deoxy-alpha-D-glucopyranoside + AMP + diphosphate + H(+). Its function is as follows. Catalyzes the ATP-dependent condensation of GlcN-Ins and L-cysteine to form L-Cys-GlcN-Ins. The chain is L-cysteine:1D-myo-inositol 2-amino-2-deoxy-alpha-D-glucopyranoside ligase from Geodermatophilus obscurus (strain ATCC 25078 / DSM 43160 / JCM 3152 / CCUG 61914 / KCC A-0152 / KCTC 9177 / NBRC 13315 / NRRL B-3577 / G-20).